The chain runs to 249 residues: tRNA pseudouridine synthase A (249 aa).

Asp53 acts as the Nucleophile in catalysis. A substrate-binding site is contributed by Tyr111.

It belongs to the tRNA pseudouridine synthase TruA family. As to quaternary structure, homodimer.

The catalysed reaction is uridine(38/39/40) in tRNA = pseudouridine(38/39/40) in tRNA. Its function is as follows. Formation of pseudouridine at positions 38, 39 and 40 in the anticodon stem and loop of transfer RNAs. This Streptococcus suis (strain 98HAH33) protein is tRNA pseudouridine synthase A.